A 151-amino-acid polypeptide reads, in one-letter code: uncharacterized protein (151 aa).

2 consecutive BON domains span residues 2–68 (DDAA…AVDK) and 78–146 (IDSA…RLKH).

This is an uncharacterized protein from Anaplasma centrale.